The sequence spans 60 residues: MNAAFIAALLILGALTLDAMAYSFTCERIPCTNNSDCHGSDLCQCRPPRGDGFSYFCSEY.

The signal sequence occupies residues Met1–Ala21. The Cell attachment site signature appears at Arg49–Asp51.

It belongs to the ixodegrin family. Contains 3 disulfide bonds. As to expression, expressed in salivary glands.

Its subcellular location is the secreted. In terms of biological role, tick salivary platelet aggregation inhibitor that plays an important part in the anti-hemostatic strategy of ticks. Inhibits platelet aggregation induced by ADP, thrombin and thromboxane A2 (TXA2). Blocks platelet adhesion to soluble collagen (most probably through the binding to alpha-2/beta-1 integrin (ITGA2/ITGB1)) and binds to purified glycoprotein IIb/IIIa (ITGA2B/ITGB3) in a dose-dependent manner. In vivo, reduces thrombus weight effectively in a rat arteriovenous shunt model and inhibits thrombosis in a carrageenan-induced mouse tail thrombosis model. This is Ixodegrin-like peptide from Ixodes scapularis (Black-legged tick).